The sequence spans 539 residues: Magnesium/proton exchanger (539 aa).

11 helical membrane-spanning segments follow: residues 38-58 (GLRG…LSAI), 98-118 (IADI…LATI), 135-155 (GTLV…CVVV), 167-187 (LGVW…LYII), 195-215 (VITL…LVHA), 341-361 (IANS…AFVP), 365-385 (IAHG…VAFV), 392-412 (LISC…LASG), 444-464 (VNIY…NYFA), 477-497 (LSFS…VLVL), and 511-531 (LWAW…VVLS).

The protein belongs to the Ca(2+):cation antiporter (CaCA) (TC 2.A.19) family. MHX subfamily. As to expression, high expression in leaves (at protein level).

It localises to the vacuole membrane. Vacuolar transporter that exchanges protons with Mg(2+), Zn(2+) and Fe(2+) ions. May control the partitioning of Mg(2+) and Zn(2+) between plant organs. Could play a role in Zn(2+) accumulation or tolerance. The polypeptide is Magnesium/proton exchanger (MHX) (Arabidopsis halleri subsp. halleri (Arabis halleri)).